Here is a 362-residue protein sequence, read N- to C-terminus: Vignain (362 aa).

Residues 1 to 20 (MATKKLLWVVLSFSLVLGVA) form the signal peptide. Positions 21–131 (NSFDFHDKDL…YEKVVSVPPS (111 aa)) are cleaved as a propeptide — activation peptide. Disulfide bonds link cysteine 149-cysteine 191, cysteine 183-cysteine 224, and cysteine 282-cysteine 334. The active site involves cysteine 152. Residues histidine 288 and asparagine 309 contribute to the active site. 2 N-linked (GlcNAc...) asparagine glycosylation sites follow: asparagine 326 and asparagine 346. A Prevents secretion from ER motif is present at residues 359–362 (KDEL).

It belongs to the peptidase C1 family. In terms of assembly, monomer.

It is found in the endoplasmic reticulum lumen. Functionally, thought to be involved in the hydrolysis of stored seed proteins. This Phaseolus vulgaris (Kidney bean) protein is Vignain.